A 150-amino-acid chain; its full sequence is Transthyretin (150 aa).

An N-terminal signal peptide occupies residues 1 to 20 (MASYRLLLLCLAGLVFVSEA). At Cys-30 the chain carries Sulfocysteine. Lys-35 serves as a coordination point for L-thyroxine. 4-carboxyglutamate is present on Glu-62. L-thyroxine is bound at residue Glu-74. An N-linked (GlcNAc...) asparagine glycan is attached at Asn-118. Ser-137 is an L-thyroxine binding site.

The protein belongs to the transthyretin family. In terms of assembly, homotetramer. Dimer of dimers. In the homotetramer, subunits assemble around a central channel that can accommodate two ligand molecules. Interacts with RBP4. Post-translationally, sulfonation of the reactive cysteine Cys-30 enhances the stability of the native conformation of TTR, avoiding misassembly of the protein leading to amyloid formation. As to expression, detected in plasma and cerebrospinal fluid (at protein level). Highly expressed in the choroid plexus. Detected in liver.

It localises to the secreted. Thyroid hormone-binding protein. Probably transports thyroxine from the bloodstream to the brain. The protein is Transthyretin (TTR) of Sus scrofa (Pig).